A 485-amino-acid polypeptide reads, in one-letter code: Glutamate--tRNA ligase (485 aa).

Residues 11 to 21 carry the 'HIGH' region motif; that stretch reads PSPTGLLHIGN. Residues 255–259 carry the 'KMSKS' region motif; that stretch reads KLSKR. Lys258 lines the ATP pocket.

This sequence belongs to the class-I aminoacyl-tRNA synthetase family. Glutamate--tRNA ligase type 1 subfamily. Monomer.

Its subcellular location is the cytoplasm. It carries out the reaction tRNA(Glu) + L-glutamate + ATP = L-glutamyl-tRNA(Glu) + AMP + diphosphate. Catalyzes the attachment of glutamate to tRNA(Glu) in a two-step reaction: glutamate is first activated by ATP to form Glu-AMP and then transferred to the acceptor end of tRNA(Glu). In Streptococcus sanguinis (strain SK36), this protein is Glutamate--tRNA ligase.